We begin with the raw amino-acid sequence, 112 residues long: uncharacterized protein (112 aa).

A phosphoserine mark is found at serine 51 and serine 53. Residues 90-110 (FIFTLSMFLIAFILLIAFVSF) form a helical membrane-spanning segment.

It is found in the golgi apparatus membrane. It localises to the endoplasmic reticulum membrane. This is an uncharacterized protein from Schizosaccharomyces pombe (strain 972 / ATCC 24843) (Fission yeast).